We begin with the raw amino-acid sequence, 112 residues long: Secretoglobin family 2B member 20 (112 aa).

Positions 1-23 (MKGTLLLLGLLVTGELSFQTTEA) are cleaved as a signal peptide. N-linked (GlcNAc...) asparagine glycosylation is present at Asn-50.

The protein belongs to the secretoglobin family. In terms of tissue distribution, expressed in lacrimal gland, at higher level in males than females. Expressed in the submandibular gland.

It localises to the secreted. The sequence is that of Secretoglobin family 2B member 20 (Scgb2b20) from Mus musculus (Mouse).